A 449-amino-acid chain; its full sequence is Ribosomal protein uS12 methylthiotransferase RimO (449 aa).

Positions 7–123 (QKVSMVSLGC…VAEILAEHHA (117 aa)) constitute an MTTase N-terminal domain. The [4Fe-4S] cluster site is built by cysteine 16, cysteine 52, cysteine 86, cysteine 161, cysteine 165, and cysteine 168. Residues 147-377 (SSPGWYAYLK…MKTQARVSFR (231 aa)) enclose the Radical SAM core domain. The TRAM domain occupies 380 to 448 (RAMVGQTEQV…DYDLVAEMIE (69 aa)).

It belongs to the methylthiotransferase family. RimO subfamily. [4Fe-4S] cluster is required as a cofactor.

The protein resides in the cytoplasm. The enzyme catalyses L-aspartate(89)-[ribosomal protein uS12]-hydrogen + (sulfur carrier)-SH + AH2 + 2 S-adenosyl-L-methionine = 3-methylsulfanyl-L-aspartate(89)-[ribosomal protein uS12]-hydrogen + (sulfur carrier)-H + 5'-deoxyadenosine + L-methionine + A + S-adenosyl-L-homocysteine + 2 H(+). Its function is as follows. Catalyzes the methylthiolation of an aspartic acid residue of ribosomal protein uS12. This chain is Ribosomal protein uS12 methylthiotransferase RimO, found in Trichlorobacter lovleyi (strain ATCC BAA-1151 / DSM 17278 / SZ) (Geobacter lovleyi).